The chain runs to 180 residues: dCTP deaminase, dUMP-forming (180 aa).

Residues 100 to 105, Asp117, 125 to 127, Gln146, Tyr160, and Gln167 contribute to the dCTP site; these read RSSLGR and TLE. The active-site Proton donor/acceptor is Glu127.

The protein belongs to the dCTP deaminase family. Homotrimer.

The enzyme catalyses dCTP + 2 H2O = dUMP + NH4(+) + diphosphate. It functions in the pathway pyrimidine metabolism; dUMP biosynthesis; dUMP from dCTP: step 1/1. Its function is as follows. Bifunctional enzyme that catalyzes both the deamination of dCTP to dUTP and the hydrolysis of dUTP to dUMP without releasing the toxic dUTP intermediate. This Persephonella marina (strain DSM 14350 / EX-H1) protein is dCTP deaminase, dUMP-forming.